A 390-amino-acid chain; its full sequence is MRYLTAGESHGPQLTTIIEGVPAGLYITKEDIDYELQRRQKGHGRGRRMQIEKDQARITSGVRHGRSLGSPIALVVENNDWKHWTKIMGSEPITAEEESEMKRQISRPRPGHADLNGAIKYGHRDMRNVLERSSARETTVRVAAGAVAKKILSQLGIQVAGHVLEIGGVKAEKTNYESIENLKKVTEESPVRCYDEEAGRKMMDAIDEAKANGDSIGGIVEVIVEGVPVGVGSYVHYDRKLDSKLAAAVLSINAFKGVEFGIGFEAARKNGSEVHDEIIWDEEKGYTRATNRLGGLEGGMTTGMPIVVRGVMKPIPTLYKPLKSVDIETKEPFTASIERSDSCAVPAASVVAEAVVAWEIANAIVEQFGVDQMDRIAENVEKMRKLAREF.

NADP(+) is bound by residues Arg39 and Arg45. FMN-binding positions include 132–134, 253–254, Gly298, 313–317, and Arg339; these read RSS, NA, and KPIPT.

The protein belongs to the chorismate synthase family. Homotetramer. FMNH2 serves as cofactor.

It catalyses the reaction 5-O-(1-carboxyvinyl)-3-phosphoshikimate = chorismate + phosphate. It functions in the pathway metabolic intermediate biosynthesis; chorismate biosynthesis; chorismate from D-erythrose 4-phosphate and phosphoenolpyruvate: step 7/7. Its function is as follows. Catalyzes the anti-1,4-elimination of the C-3 phosphate and the C-6 proR hydrogen from 5-enolpyruvylshikimate-3-phosphate (EPSP) to yield chorismate, which is the branch point compound that serves as the starting substrate for the three terminal pathways of aromatic amino acid biosynthesis. This reaction introduces a second double bond into the aromatic ring system. The chain is Chorismate synthase from Bacillus licheniformis (strain ATCC 14580 / DSM 13 / JCM 2505 / CCUG 7422 / NBRC 12200 / NCIMB 9375 / NCTC 10341 / NRRL NRS-1264 / Gibson 46).